Here is a 282-residue protein sequence, read N- to C-terminus: NADPH-dependent 7-cyano-7-deazaguanine reductase (282 aa).

82 to 84 (IES) provides a ligand contact to substrate. 84 to 85 (SK) is an NADPH binding site. Cys-189 (thioimide intermediate) is an active-site residue. Residue Asp-196 is the Proton donor of the active site. 228 to 229 (HE) lines the substrate pocket. 257-258 (RG) provides a ligand contact to NADPH.

It belongs to the GTP cyclohydrolase I family. QueF type 2 subfamily. Homodimer.

The protein resides in the cytoplasm. It carries out the reaction 7-aminomethyl-7-carbaguanine + 2 NADP(+) = 7-cyano-7-deazaguanine + 2 NADPH + 3 H(+). It functions in the pathway tRNA modification; tRNA-queuosine biosynthesis. In terms of biological role, catalyzes the NADPH-dependent reduction of 7-cyano-7-deazaguanine (preQ0) to 7-aminomethyl-7-deazaguanine (preQ1). The protein is NADPH-dependent 7-cyano-7-deazaguanine reductase of Delftia acidovorans (strain DSM 14801 / SPH-1).